Consider the following 1634-residue polypeptide: Leucine-rich repeat-containing protein 37A3 (1634 aa).

The first 35 residues, 1–35, serve as a signal peptide directing secretion; the sequence is MTSAQCPALACVMSPLRFWGPWPLLMWQLLWLLVK. Topologically, residues 36-1581 are extracellular; that stretch reads EAQPLEWVKD…ELPGYGYTKK (1546 aa). Disordered stretches follow at residues 53 to 104, 129 to 154, 172 to 531, 619 to 642, and 758 to 777; these read PLGP…ESTE, SQQDLKDKLSPQERLPVSPKKLKKDP, TPQS…VVVA, PEPTTEVGHSTPPKRTIVSPKHPE, and EPTTETGHSTALEKTTAPRP. An LRR 1 repeat occupies 137 to 160; that stretch reads LSPQERLPVSPKKLKKDPAQRWSL. Polar residues-rich tracts occupy residues 172 to 189 and 223 to 237; these read TPQSQKQTLQNEYSSTDT and ETQNPETLEDIQSSS. LRR repeat units lie at residues 230–253 and 267–290; these read LEDIQSSSLQQEAPAQLPQLLEEE and ESSMESLTLPNHEVSVQPPGEDQA. Low complexity predominate over residues 238 to 249; sequence LQQEAPAQLPQL. A glycan (N-linked (GlcNAc...) asparagine) is linked at Asn-296. A compositionally biased stretch (polar residues) spans 307 to 326; the sequence is TITSEPTNETESSQAQQETP. The segment covering 358–368 has biased composition (low complexity); the sequence is SEQQQPVQPSE. The segment covering 433–446 has biased composition (polar residues); the sequence is LVHQEATTRLSGSG. Residues 482-493 are compositionally biased toward low complexity; the sequence is SPEPINNENPSP. A compositionally biased stretch (polar residues) spans 760–770; it reads TTETGHSTALE. LRR repeat units follow at residues 864–887, 888–911, 912–935, 937–959, 963–987, and 1002–1027; these read NGTFTILNFQGNYISYIDGNVWKA, YSWTEKLILRENNLTELHKDSFEG, LLSLQYLDLSCNKIQSIERHTFEP, PFLKFINLSCNVITELSFGTFQA, MQFLHKLILNHNPLTTVEDPYLFKL, and LTTLKNILMMTVELEKLIVPSHMACC. Asn-1079 is a glycosylation site (N-linked (GlcNAc...) asparagine). LRR repeat units follow at residues 1124–1146 and 1151–1176; these read LPYFSAVNLDVKSLLLPFIKLPT and LAKIQTVGKNRQRLNRVLMGPRSIQK. Composition is skewed to basic and acidic residues over residues 1181-1191 and 1201-1216; these read EVGRQSIRREQ and AEEKRLGSPAPRELKQ. Disordered regions lie at residues 1181 to 1227 and 1306 to 1329; these read EVGR…EKLA and RFHKTRSRMTHRTPKVKKSPKVRK. Residues 1359-1384 form an LRR 12 repeat; sequence FSSLRDLSPQENPFLEVSAPSEHFIE. Residues 1582-1602 traverse the membrane as a helical segment; that stretch reads LILALIVTGILTILIILLCLI. Residues 1603–1634 lie on the Cytoplasmic side of the membrane; it reads EICCHRRSLQEDEEGFSRDSEAPTEEESEALP. The tract at residues 1614 to 1634 is disordered; the sequence is DEEGFSRDSEAPTEEESEALP. The span at 1624–1634 shows a compositional bias: acidic residues; sequence APTEEESEALP.

This sequence belongs to the LRRC37A family.

The protein localises to the membrane. In Homo sapiens (Human), this protein is Leucine-rich repeat-containing protein 37A3 (LRRC37A3).